A 461-amino-acid polypeptide reads, in one-letter code: Argininosuccinate lyase (461 aa).

This sequence belongs to the lyase 1 family. Argininosuccinate lyase subfamily.

It localises to the cytoplasm. The enzyme catalyses 2-(N(omega)-L-arginino)succinate = fumarate + L-arginine. Its pathway is amino-acid biosynthesis; L-arginine biosynthesis; L-arginine from L-ornithine and carbamoyl phosphate: step 3/3. The polypeptide is Argininosuccinate lyase (Laribacter hongkongensis (strain HLHK9)).